The following is a 133-amino-acid chain: Putative actin-depolymerizing factor 11 (133 aa).

The region spanning 1–133 is the ADF-H domain; that stretch reads MVLHDDCKLT…SLDAIRRRIN (133 aa).

The protein belongs to the actin-binding proteins ADF family.

It is found in the cytoplasm. The protein resides in the cytoskeleton. Its function is as follows. Actin-depolymerizing protein. Severs actin filaments (F-actin) and binds to actin monomers. This chain is Putative actin-depolymerizing factor 11 (ADF11), found in Arabidopsis thaliana (Mouse-ear cress).